A 193-amino-acid polypeptide reads, in one-letter code: ATP-dependent Clp protease proteolytic subunit (193 aa).

The active-site Nucleophile is the S98. Residue H123 is part of the active site.

The protein belongs to the peptidase S14 family. As to quaternary structure, fourteen ClpP subunits assemble into 2 heptameric rings which stack back to back to give a disk-like structure with a central cavity, resembling the structure of eukaryotic proteasomes.

It localises to the cytoplasm. It catalyses the reaction Hydrolysis of proteins to small peptides in the presence of ATP and magnesium. alpha-casein is the usual test substrate. In the absence of ATP, only oligopeptides shorter than five residues are hydrolyzed (such as succinyl-Leu-Tyr-|-NHMec, and Leu-Tyr-Leu-|-Tyr-Trp, in which cleavage of the -Tyr-|-Leu- and -Tyr-|-Trp bonds also occurs).. Its function is as follows. Cleaves peptides in various proteins in a process that requires ATP hydrolysis. Has a chymotrypsin-like activity. Plays a major role in the degradation of misfolded proteins. The polypeptide is ATP-dependent Clp protease proteolytic subunit (Lachnospira eligens (strain ATCC 27750 / DSM 3376 / VPI C15-48 / C15-B4) (Eubacterium eligens)).